A 206-amino-acid chain; its full sequence is Testis-expressed protein 38 (206 aa).

A helical transmembrane segment spans residues 15–35; that stretch reads VSLYFGILGLCSVITGGCIIF.

It localises to the membrane. The chain is Testis-expressed protein 38 (TEX38) from Homo sapiens (Human).